The chain runs to 549 residues: Glucose-6-phosphate isomerase (549 aa).

Glu-355 serves as the catalytic Proton donor. Catalysis depends on residues His-386 and Lys-514.

It belongs to the GPI family.

It is found in the cytoplasm. It carries out the reaction alpha-D-glucose 6-phosphate = beta-D-fructose 6-phosphate. It functions in the pathway carbohydrate biosynthesis; gluconeogenesis. It participates in carbohydrate degradation; glycolysis; D-glyceraldehyde 3-phosphate and glycerone phosphate from D-glucose: step 2/4. Its function is as follows. Catalyzes the reversible isomerization of glucose-6-phosphate to fructose-6-phosphate. The protein is Glucose-6-phosphate isomerase of Salmonella agona (strain SL483).